A 183-amino-acid chain; its full sequence is MDQNVSTALKSFTQRYIDLWQQQTGRPPASEELYGVPSPCNIETQDNQVFWLPQPFVGEANLANVERALEIQLHPDIHEFYTQQYAGDMKADLGDHRFTLLQVWSEDDFIRLQENLIGHLVTQKRLKLSPTLFLATTESEMTMASLCNVSGNMVLEEFGSGKRTLLASTLAHFLDALRPVFPE.

It belongs to the Syd family.

Its subcellular location is the cell inner membrane. Its function is as follows. Interacts with the SecY protein in vivo. May bind preferentially to an uncomplexed state of SecY, thus functioning either as a chelating agent for excess SecY in the cell or as a regulatory factor that negatively controls the translocase function. The chain is Protein Syd from Yersinia enterocolitica serotype O:8 / biotype 1B (strain NCTC 13174 / 8081).